Here is a 519-residue protein sequence, read N- to C-terminus: FAD-dependent monooxygenase macF (519 aa).

A signal peptide spans 1–20; sequence MTKMTSIIGILMGVLTTATA. Positions 88 to 262 constitute an FAD-binding PCMH-type domain; the sequence is CRLNASCIVT…TEYDLTTNTG (175 aa). Histidine 125 carries the post-translational modification Pros-8alpha-FAD histidine.

Belongs to the oxygen-dependent FAD-linked oxidoreductase family.

Its pathway is secondary metabolite biosynthesis; terpenoid biosynthesis. Functionally, FAD-dependent monooxygenase; part of the gene cluster that mediates the biosynthesis of macrophorins, isoprenoid epoxycyclohexenones containing cyclized drimane moieties. The first step of the pathway is the synthesis of 6-methylsalicylic acid (6-MSA) by the polyketide synthase macA. 6-MSA is then converted to m-cresol by the decarboxylase macB. The cytochrome P450 monooxygenase macC then catalyzes the oxidation of m-cresol to toluquinol. Epoxidation of toluquinol is then performed by the short chain dehydrogenase macD, with the help of macE, and a further prenylation by macG leads to 7-deacetoxyyanuthone A. The next step is the hydroxylation of C-22 of 7-deacetoxyyanuthone A by the cytochrome P450 monooxygenase macH to yield 22-deacetylyanuthone A. O-Mevalon transferase macI then attaches mevalon to the hydroxyl group of 22-deacetylyanuthone A to produce yanuthone E. The terpene cyclase macJ catalyzes the cyclization of 22-deacetylyanuthone A to macrophorin A. MacJ is also able to catalyze cyclization of yanuthone E and 7-deacetoxyyanuthone A to their corresponding macrophorins. The macJ products can be further modified by macH and macJ, as well as by the FAD-dependent monooxygenase macF, to produce additional macrophorins, including 4'-oxomacrophorin A, 4'-oxomacrophorin D and 4'-oxomacrophorin E. The sequence is that of FAD-dependent monooxygenase macF from Penicillium terrestre.